The primary structure comprises 248 residues: 1-(5-phosphoribosyl)-5-[(5-phosphoribosylamino)methylideneamino] imidazole-4-carboxamide isomerase (248 aa).

The active-site Proton acceptor is the Asp-8. Asp-131 (proton donor) is an active-site residue.

It belongs to the HisA/HisF family.

It localises to the cytoplasm. The enzyme catalyses 1-(5-phospho-beta-D-ribosyl)-5-[(5-phospho-beta-D-ribosylamino)methylideneamino]imidazole-4-carboxamide = 5-[(5-phospho-1-deoxy-D-ribulos-1-ylimino)methylamino]-1-(5-phospho-beta-D-ribosyl)imidazole-4-carboxamide. It functions in the pathway amino-acid biosynthesis; L-histidine biosynthesis; L-histidine from 5-phospho-alpha-D-ribose 1-diphosphate: step 4/9. The protein is 1-(5-phosphoribosyl)-5-[(5-phosphoribosylamino)methylideneamino] imidazole-4-carboxamide isomerase of Nitrosomonas eutropha (strain DSM 101675 / C91 / Nm57).